A 377-amino-acid polypeptide reads, in one-letter code: Chaperone protein DnaJ (377 aa).

Positions 5-70 (DFYEVLGVER…SKRAAYDQYG (66 aa)) constitute a J domain. A CR-type zinc finger spans residues 136 to 214 (GTTVTIRVPT…CHGQGRVEEQ (79 aa)). The Zn(2+) site is built by Cys149, Cys152, Cys166, Cys169, Cys188, Cys191, Cys202, and Cys205. CXXCXGXG motif repeat units lie at residues 149–156 (CKTCNGSG), 166–173 (CTTCGGIG), 188–195 (CPRCHGTG), and 202–209 (CGSCHGQG).

It belongs to the DnaJ family. In terms of assembly, homodimer. Requires Zn(2+) as cofactor.

The protein resides in the cytoplasm. Its function is as follows. Participates actively in the response to hyperosmotic and heat shock by preventing the aggregation of stress-denatured proteins and by disaggregating proteins, also in an autonomous, DnaK-independent fashion. Unfolded proteins bind initially to DnaJ; upon interaction with the DnaJ-bound protein, DnaK hydrolyzes its bound ATP, resulting in the formation of a stable complex. GrpE releases ADP from DnaK; ATP binding to DnaK triggers the release of the substrate protein, thus completing the reaction cycle. Several rounds of ATP-dependent interactions between DnaJ, DnaK and GrpE are required for fully efficient folding. Also involved, together with DnaK and GrpE, in the DNA replication of plasmids through activation of initiation proteins. The sequence is that of Chaperone protein DnaJ from Pseudomonas aeruginosa (strain LESB58).